A 718-amino-acid polypeptide reads, in one-letter code: ADP-ribosylation factor-binding protein GGA3 (718 aa).

Residues 16-146 (ATNPSNRQED…MLKRQGIVQS (131 aa)) enclose the VHS domain. A phosphoserine mark is found at S159 and S275. Residues 171–298 (DEEKSKLLAR…VINSYKTIIE (128 aa)) enclose the GAT domain. The interval 299-588 (GQIVNGEVTT…VHVPLESIKP (290 aa)) is unstructured hinge. Low complexity-rich tracts occupy residues 334–350 (APSNSSPALAPPTSGIP) and 360–369 (GPPRSRSSSQ). The interval 334–381 (APSNSSPALAPPTSGIPILPPPPQTSGPPRSRSSSQAEAPPGSDSTNN) is disordered. The Autoinhibitory motif lies at 387–391 (DEELL). Disordered regions lie at residues 395-455 (LTDP…MSQA) and 477-506 (SFMFSSGPAPALAPKAEPKGPEYPSSSTSH). Residues 589–710 (SSALPVTAYD…TELGEVDQFP (122 aa)) form the GAE domain.

The protein belongs to the GGA protein family. Monomer. Interacts with GGA1 and GGA2. Binds to clathrin and activated ARFs, such as ARF1, ARF5 and ARF6. Binds RABEP1 and RABGEF1. Interacts with the membrane proteins M6PR/CD-MPR and IGF2R/CI-MPR and the accessory proteins SYNRG, EPN4, NECAP1, NECAP2 and AFTPH/aftiphilin. Interacts with TSG101 and UBC. Interacts with ADRA2B. Interacts with NTRK1; the interaction is independent of NTRK1 activation and ubiquitination. Interacts (via VHS domain) with BACE1 (via DXXLL motif). Post-translationally, phosphorylated by CK2 and dephosphorylated by PP2A. Phosphorylation of GGA3 allows the internal DXXLL motif to bind the VHS domain and to inhibit the recognition of cargo signals. In terms of processing, ubiquitinated. Proteolytically cleaved during apoptosis by CASP3.

Its subcellular location is the golgi apparatus. The protein localises to the trans-Golgi network membrane. It is found in the endosome membrane. It localises to the early endosome membrane. The protein resides in the recycling endosome membrane. Functionally, plays a role in protein sorting and trafficking between the trans-Golgi network (TGN) and endosomes. Mediates the ARF-dependent recruitment of clathrin to the TGN and binds ubiquitinated proteins and membrane cargo molecules with a cytosolic acidic cluster-dileucine (DXXLL) motif. Its function is as follows. Plays a role in protein sorting and trafficking between the trans-Golgi network (TGN) and endosomes. Mediates the ARF-dependent recruitment of clathrin to the TGN and binds ubiquitinated proteins and membrane cargo molecules with a cytosolic acidic cluster-dileucine (DXXLL) motif. Mediates export of the GPCR receptor ADRA2B to the cell surface. Involved in BACE1 transport and sorting as well as regulation of BACE1 protein levels. Regulates retrograde transport of BACE1 from endosomes to the trans-Golgi network via interaction through the VHS motif and dependent of BACE1 phosphorylation. Modulates BACE1 protein levels independently of the interaction between VHS domain and DXXLL motif through recognition of ubiquitination. Key player in a novel DXXLL-mediated endosomal sorting machinery to the recycling pathway that targets NTRK1 to the plasma membrane. The polypeptide is ADP-ribosylation factor-binding protein GGA3 (Gga3) (Mus musculus (Mouse)).